A 161-amino-acid polypeptide reads, in one-letter code: MVRPQSAAEFDKKKVVAENRRARFDYAIEQVFEAGIALQGTEVKSLRFGEGTIAESYAEVNGGEVWLINANIPEFSHGNRFNHEPKRPRKLLLNWREINKLHAGVARQGMTLVPLSVYFNSRGRAKVELALAKGKKAHDKRESIKERDWKRDKQRLLKDRG.

The tract at residues 140 to 161 is disordered; that stretch reads KRESIKERDWKRDKQRLLKDRG.

Belongs to the SmpB family.

The protein localises to the cytoplasm. Its function is as follows. Required for rescue of stalled ribosomes mediated by trans-translation. Binds to transfer-messenger RNA (tmRNA), required for stable association of tmRNA with ribosomes. tmRNA and SmpB together mimic tRNA shape, replacing the anticodon stem-loop with SmpB. tmRNA is encoded by the ssrA gene; the 2 termini fold to resemble tRNA(Ala) and it encodes a 'tag peptide', a short internal open reading frame. During trans-translation Ala-aminoacylated tmRNA acts like a tRNA, entering the A-site of stalled ribosomes, displacing the stalled mRNA. The ribosome then switches to translate the ORF on the tmRNA; the nascent peptide is terminated with the 'tag peptide' encoded by the tmRNA and targeted for degradation. The ribosome is freed to recommence translation, which seems to be the essential function of trans-translation. The sequence is that of SsrA-binding protein from Sphingopyxis alaskensis (strain DSM 13593 / LMG 18877 / RB2256) (Sphingomonas alaskensis).